An 899-amino-acid chain; its full sequence is MSAATEPTKEKPVNNQDSDDEDEDIDQLIEDLQSHHGLDDESEDDEHVAAGSARPVPEELLQTDPSYGLTSDEVTKRRKKYGLNQMSEETENLFVKFLMFFIGPIQFVMEAAAILAAGLEDWVDFGVICGLLFLNAAVGFIQEYQAGSIVDELKKTLANSAVVIRDGNLVEVPSNEVVPGDILQLEDGVVIPADGRLVTEDCFIQIDQSAITGESLAVDKRFGDSTFSSSTVKRGEAFMIVTATGDSTFVGRAAALVNKAAAGSGHFTEVLNGIGTILLILVIVTLLLVWVASFYRTNKIVRILRYTLAITIVGVPVGLPAVVTTTMAVGAAYLAKKQAIVQKLSAIESLAGVEILCSDKTGTLTKNKLSLHEPYTVEGVDPDDLMLTACLAASRKKKGLDAIDKAFLKSLISYPRAKAALTKYKLLEFHPFDPVSKKVTAIVESPEGERIICVKGAPLFVLKTVEEEHPIPEDVRENYENKVAELASRGFRALGVARKRGEGHWEILGVMPCMDPPRDDTAQTVNEARHLGLRVKMLTGDAVGIAKETCRQLGLGTNIYNAERLGLGGGGDMPGSELADFVENADGFAEVFPQHKYNVVEILQQRGYLVAMTGDGVNDAPSLKKADTGIAVEGATDAARSAADIVFLAPGLSAIIDALKTSRQIFHRMYSYVVYRIALSLHLEIFLGLWIAILNRSLNIDLVVFIAIFADVATLAIAYDNAPYSPKPVKWNLRRLWGMSVILGIILAIGTWITLTTMFVPKGGIIQNFGSIDGVLFLQISLTENWLIFITRAAGPFWSSIPSWQLSGAVLIVDIIATMFCLFGWWSQNWNDIVTVVRVWIFSFGVFCVMGGAYYMMSESEAFDRFMNGKSRRDKPSGRSVEDFLMAMQRVSTQHEKEN.

The disordered stretch occupies residues 1–72 (MSAATEPTKE…TDPSYGLTSD (72 aa)). Residues 1–96 (MSAATEPTKE…SEETENLFVK (96 aa)) are Cytoplasmic-facing. Residues 17–29 (DSDDEDEDIDQLI) show a composition bias toward acidic residues. The chain crosses the membrane as a helical span at residues 97–117 (FLMFFIGPIQFVMEAAAILAA). At 118-121 (GLED) the chain is on the extracellular side. The chain crosses the membrane as a helical span at residues 122-141 (WVDFGVICGLLFLNAAVGFI). Residues 142–272 (QEYQAGSIVD…GSGHFTEVLN (131 aa)) are Cytoplasmic-facing. Residues 273–294 (GIGTILLILVIVTLLLVWVASF) traverse the membrane as a helical segment. The Extracellular segment spans residues 295–305 (YRTNKIVRILR). The helical transmembrane segment at 306–328 (YTLAITIVGVPVGLPAVVTTTMA) threads the bilayer. At 329 to 700 (VGAAYLAKKQ…IAILNRSLNI (372 aa)) the chain is on the cytoplasmic side. Catalysis depends on Asp-359, which acts as the 4-aspartylphosphate intermediate. Positions 615 and 619 each coordinate Mg(2+). The helical transmembrane segment at 701 to 719 (DLVVFIAIFADVATLAIAY) threads the bilayer. Residues 720 to 735 (DNAPYSPKPVKWNLRR) are Extracellular-facing. A helical membrane pass occupies residues 736-755 (LWGMSVILGIILAIGTWITL). Over 756 to 805 (TTMFVPKGGIIQNFGSIDGVLFLQISLTENWLIFITRAAGPFWSSIPSWQ) the chain is Cytoplasmic. The chain crosses the membrane as a helical span at residues 806–826 (LSGAVLIVDIIATMFCLFGWW). Residues 827–838 (SQNWNDIVTVVR) lie on the Extracellular side of the membrane. The helical transmembrane segment at 839-855 (VWIFSFGVFCVMGGAYY) threads the bilayer. The Cytoplasmic segment spans residues 856–899 (MMSESEAFDRFMNGKSRRDKPSGRSVEDFLMAMQRVSTQHEKEN).

The protein belongs to the cation transport ATPase (P-type) (TC 3.A.3) family. Type IIIA subfamily.

It localises to the cell membrane. It catalyses the reaction ATP + H2O + H(+)(in) = ADP + phosphate + 2 H(+)(out). Activated by high pH or also by potassium ions when the medium pH is low. The plasma membrane ATPase of plants and fungi is a hydrogen ion pump. The proton gradient it generates drives the active transport of nutrients by H(+)-symport. The resulting external acidification and/or internal alkinization may mediate growth responses. The chain is Plasma membrane ATPase (PMA1) from Kluyveromyces lactis (strain ATCC 8585 / CBS 2359 / DSM 70799 / NBRC 1267 / NRRL Y-1140 / WM37) (Yeast).